An 806-amino-acid polypeptide reads, in one-letter code: Protein bimA (806 aa).

TPR repeat units follow at residues 76–109 and 127–160; these read LGCS…WTSR and AAVL…NPFM. Disordered regions lie at residues 202 to 348, 353 to 372, and 401 to 460; these read VLPP…HRLG, TVSG…QGVG, and REVK…ASSK. A compositionally biased stretch (polar residues) spans 224–237; sequence AGTTRSDSTSTHGS. The segment covering 246-257 has biased composition (low complexity); it reads GSTVSVASSGTG. The segment at 260–399 is bimA domain; sequence LPREGMETPG…ISSTALGVKE (140 aa). Positions 328–348 are enriched in basic and acidic residues; the sequence is TKFESDEGHTERDAGMGHRLG. Residues 408 to 421 are compositionally biased toward polar residues; sequence TTGNKARTTTSSNV. Residues 432-445 are compositionally biased toward basic and acidic residues; the sequence is HAGEIHDGDSKEYR. The span at 446–459 shows a compositional bias: low complexity; that stretch reads GTSSTSNGSQNASS. TPR repeat units follow at residues 513–546, 581–614, 616–648, 649–682, 684–716, and 751–784; these read PWVL…APSR, PEAW…DPHF, YGFT…DSRH, YNAW…NPSN, VLIC…APHS, and ANVH…DPKA.

It belongs to the APC3/CDC27 family.

Its subcellular location is the nucleus. In terms of biological role, required for the completion of mitosis in Aspergillus nidulans. The protein is Protein bimA (bimA) of Emericella nidulans (strain FGSC A4 / ATCC 38163 / CBS 112.46 / NRRL 194 / M139) (Aspergillus nidulans).